Consider the following 62-residue polypeptide: Large ribosomal subunit protein bL28 (62 aa).

This sequence belongs to the bacterial ribosomal protein bL28 family.

The chain is Large ribosomal subunit protein bL28 from Clostridioides difficile (strain 630) (Peptoclostridium difficile).